The sequence spans 188 residues: Elongation factor P-like protein (188 aa).

This sequence belongs to the elongation factor P family.

The polypeptide is Elongation factor P-like protein (Vibrio campbellii (strain ATCC BAA-1116)).